The chain runs to 85 residues: MNSLLIITACLVLFVWAKEGYLVNKSTGCKYGCFWLGKNENCDMECKAKNQGGSYGYCYSFACWCEGLPDSTPTYPLPNKSCSKK.

The first 17 residues, 1 to 17, serve as a signal peptide directing secretion; it reads MNSLLIITACLVLFVWA. One can recognise an LCN-type CS-alpha/beta domain in the interval 18-83; sequence KEGYLVNKST…TYPLPNKSCS (66 aa). 4 cysteine pairs are disulfide-bonded: Cys29–Cys82, Cys33–Cys58, Cys42–Cys63, and Cys46–Cys65. A propeptide spans 84-85 (removed by a carboxypeptidase); the sequence is KK.

The protein belongs to the long (4 C-C) scorpion toxin superfamily. Sodium channel inhibitor family. Beta subfamily. Expressed by the venom gland.

The protein localises to the secreted. Its function is as follows. Beta toxins bind voltage-independently at site-4 of sodium channels (Nav) and shift the voltage of activation toward more negative potentials thereby affecting sodium channel activation and promoting spontaneous and repetitive firing. The polypeptide is Toxin Cll5c* (Centruroides limpidus (Mexican scorpion)).